Here is a 175-residue protein sequence, read N- to C-terminus: Ribosome maturation factor RimM (175 aa).

In terms of domain architecture, PRC barrel spans 97–170; that stretch reads NGQYYWTDVL…YLYVDWQMAW (74 aa).

It belongs to the RimM family. As to quaternary structure, binds ribosomal protein uS19.

Its subcellular location is the cytoplasm. Functionally, an accessory protein needed during the final step in the assembly of 30S ribosomal subunit, possibly for assembly of the head region. Essential for efficient processing of 16S rRNA. May be needed both before and after RbfA during the maturation of 16S rRNA. It has affinity for free ribosomal 30S subunits but not for 70S ribosomes. This is Ribosome maturation factor RimM from Dichelobacter nodosus (strain VCS1703A).